The primary structure comprises 256 residues: Enolase-phosphatase E1 (256 aa).

Mg(2+) is bound by residues Asp-13 and Glu-15. Residues 127 to 128 and Lys-175 contribute to the substrate site; that span reads SS. Asp-202 serves as a coordination point for Mg(2+).

This sequence belongs to the HAD-like hydrolase superfamily. MasA/MtnC family. In terms of assembly, monomer. The cofactor is Mg(2+).

The protein resides in the cytoplasm. The protein localises to the nucleus. It catalyses the reaction 5-methylsulfanyl-2,3-dioxopentyl phosphate + H2O = 1,2-dihydroxy-5-(methylsulfanyl)pent-1-en-3-one + phosphate. It functions in the pathway amino-acid biosynthesis; L-methionine biosynthesis via salvage pathway; L-methionine from S-methyl-5-thio-alpha-D-ribose 1-phosphate: step 3/6. The protein operates within amino-acid biosynthesis; L-methionine biosynthesis via salvage pathway; L-methionine from S-methyl-5-thio-alpha-D-ribose 1-phosphate: step 4/6. Its function is as follows. Bifunctional enzyme that catalyzes the enolization of 2,3-diketo-5-methylthiopentyl-1-phosphate (DK-MTP-1-P) into the intermediate 2-hydroxy-3-keto-5-methylthiopentenyl-1-phosphate (HK-MTPenyl-1-P), which is then dephosphorylated to form the acireductone 1,2-dihydroxy-3-keto-5-methylthiopentene (DHK-MTPene). This is Enolase-phosphatase E1 (utr4) from Botryotinia fuckeliana (strain B05.10) (Noble rot fungus).